A 711-amino-acid chain; its full sequence is MAERESGGLGGGAASPPAASPFLGLHIASPPNFRLTHDISLEEFEDEDLSEITDECGISLQCKDTLSLRPPRAGLLSAGGGGAGSRLQAEMLQMDLIDATGDTPGAEDDEEDDDEERAARRPGAGPPKAESGQEPASRGQGQSQGQSQGPGSGDTYRPKRPTTLNLFPQVPRSQDTLNNNSLGKKHSWQDRVSRSSSPLKTGEQTPPHEHICLSDELPPQSGPAPTTDRGTSTDSPCRRSTATQMAPPGGPPAAPPGGRGHSHRDRIHYQADVRLEATEEIYLTPVQRPPDAAEPTSAFLPPTESRMSVSSDPDPAAYPSTAGRPHPSISEEEEGFDCLSSPERAEPPGGGWRGSLGEPPPPPRASLSSDTSALSYDSVKYTLVVDEHAQLELVSLRPCFGDYSDESDSATVYDNCASVSSPYESAIGEEYEEAPRPQPPACLSEDSTPDEPDVHFSKKFLNVFMSGRSRSSSAESFGLFSCIINGEEQEQTHRAIFRFVPRHEDELELEVDDPLLVELQAEDYWYEAYNMRTGARGVFPAYYAIEVTKEPEHMAALAKNSDWVDQFRVKFLGSVQVPYHKGNDVLCAAMQKIATTRRLTVHFNPPSSCVLEISVRGVKIGVKADDSQEAKGNKCSHFFQLKNISFCGYHPKNNKYFGFITKHPADHRFACHVFVSEDSTKALAESVGRAFQQFYKQFVEYTCPTEDIYLE.

Residues 1 to 27 (MAERESGGLGGGAASPPAASPFLGLHI) form a disordered region. Over residues 14–25 (ASPPAASPFLGL) the composition is skewed to low complexity. Phosphoserine occurs at positions 15, 29, and 40. A disordered region spans residues 78–371 (AGGGGAGSRL…PPRASLSSDT (294 aa)). T103 bears the Phosphothreonine; by MAPK8, MAPK9 and MAPK10 mark. A compositionally biased stretch (acidic residues) spans 105-116 (GAEDDEEDDDEE). Residues 127–285 (PKAESGQEPA…EATEEIYLTP (159 aa)) are JNK-binding domain (JBD). Residues 139–149 (GQGQSQGQSQG) are compositionally biased toward low complexity. S152 carries the phosphoserine modification. Positions 157-176 (RPKRPTTLNLFPQVPRSQDT) are minimal inhibitory domain (MID). A compositionally biased stretch (polar residues) spans 162 to 182 (TTLNLFPQVPRSQDTLNNNSL). Residues S181, S187, S193, S195, and S196 each carry the phosphoserine modification. Positions 194–204 (RSSSPLKTGEQ) are enriched in polar residues. At T205 the chain carries Phosphothreonine; by MAPK8, MAPK9 and MAPK10. S214 carries the phosphoserine modification. Positions 228–244 (DRGTSTDSPCRRSTATQ) are enriched in polar residues. A compositionally biased stretch (basic and acidic residues) spans 267–277 (IHYQADVRLEA). The interval 283-471 (LTPVQRPPDA…NVFMSGRSRS (189 aa)) is interaction with MAP3K7. Phosphoserine is present on residues S311, S328, S330, S340, S355, S366, S369, S407, and S409. Short sequence motifs (D-box) lie at residues 353–360 (RGSLGEPP) and 364–372 (RASLSSDTS). The residue at position 411 (T411) is a Phosphothreonine. The segment at 429–451 (EEYEEAPRPQPPACLSEDSTPDE) is disordered. 2 positions are modified to phosphoserine: S444 and S447. T448 bears the Phosphothreonine mark. Phosphoserine is present on residues S469, S471, S472, and S473. Residues 471-660 (SSSAESFGLF…PKNNKYFGFI (190 aa)) are interaction with VRK2. The region spanning 488 to 549 (EQEQTHRAIF…PAYYAIEVTK (62 aa)) is the SH3 domain. Positions 561–700 (SDWVDQFRVK…FQQFYKQFVE (140 aa)) constitute a PID domain.

Belongs to the JIP scaffold family. In terms of assembly, forms homo- or heterooligomeric complexes. Binds specific components of the JNK signaling pathway namely, MAPK8/JNK1, MAPK9/JNK2, MAPK10/JNK3, MAP2K7/MKK7, MAP3K11/MLK3 and DLK1. Also binds the proline-rich domain-containing splice variant of apolipoprotein E receptor 2 (ApoER2). Interacts, via the PID domain, with ARHGEF28. Binds the cytoplasmic tails of LRP1 and LRP2 (Megalin). Binds the TPR motif-containing C-terminal of KNS2, then the pre-assembled MAPK8IP1 scaffolding complexes are transported as a cargo of kinesin, to the required subcellular location. Interacts with the cytoplasmic domain of APP. Interacts with DCLK2. Interacts with MAP3K7/TAK1. Interacts with isoform 1 and isoform 2 of VRK2. Found in a complex with SH3RF1, RAC1, MAP3K11/MLK3, MAP2K7/MKK7 and MAPK8/JNK1. Found in a complex with SH3RF1, RAC2, MAP3K7/TAK1, MAP2K7/MKK7, MAPK8/JNK1 and MAPK9/JNK2. Interacts with SH3RF2. Post-translationally, phosphorylated by MAPK8, MAPK9 and MAPK10. Phosphorylation on Thr-103 is also necessary for the dissociation and activation of MAP3K12. Phosphorylated by isoform 1 and isoform 2 of VRK2. Hyperphosphorylated during mitosis following activation of stress-activated and MAP kinases. In terms of processing, ubiquitinated. Two preliminary events are required to prime for ubiquitination; phosphorylation and an increased in intracellular calcium concentration. Then, the calcium influx initiates ubiquitination and degradation by the ubiquitin-proteasome pathway. Highly expressed in brain. Expressed in neurons, localizing to neurite tips in differentiating cells. Also expressed in the pancreas, testis and prostate. Low levels in heart, ovary and small intestine. Decreased levels in pancreatic beta cells sensitize cells to IL-1-beta-induced apoptosis.

Its subcellular location is the cytoplasm. It is found in the perinuclear region. The protein localises to the nucleus. It localises to the endoplasmic reticulum membrane. The protein resides in the mitochondrion membrane. The JNK-interacting protein (JIP) group of scaffold proteins selectively mediates JNK signaling by aggregating specific components of the MAPK cascade to form a functional JNK signaling module. Required for JNK activation in response to excitotoxic stress. Cytoplasmic MAPK8IP1 causes inhibition of JNK-regulated activity by retaining JNK in the cytoplasm and inhibiting JNK phosphorylation of c-Jun. May also participate in ApoER2-specific reelin signaling. Directly, or indirectly, regulates GLUT2 gene expression and beta-cell function. Appears to have a role in cell signaling in mature and developing nerve terminals. May function as a regulator of vesicle transport, through interactions with the JNK-signaling components and motor proteins. Functions as an anti-apoptotic protein and whose level seems to influence the beta-cell death or survival response. Acts as a scaffold protein that coordinates with SH3RF1 in organizing different components of the JNK pathway, including RAC1 or RAC2, MAP3K11/MLK3 or MAP3K7/TAK1, MAP2K7/MKK7, MAPK8/JNK1 and/or MAPK9/JNK2 into a functional multiprotein complex to ensure the effective activation of the JNK signaling pathway. Regulates the activation of MAPK8/JNK1 and differentiation of CD8(+) T-cells. This chain is C-Jun-amino-terminal kinase-interacting protein 1 (MAPK8IP1), found in Homo sapiens (Human).